The chain runs to 510 residues: NAD(P)H-quinone oxidoreductase subunit 2 B, chloroplastic (510 aa).

A run of 14 helical transmembrane segments spans residues 24 to 44, 59 to 79, 99 to 119, 124 to 144, 149 to 169, 184 to 204, 229 to 249, 261 to 281, 295 to 315, 323 to 343, 354 to 374, 395 to 415, 418 to 438, and 484 to 504; these read LLLF…GLIL, WFYF…LFRW, IFQF…VEYI, MAIT…MFLC, LITI…LSGY, LLMG…LYGL, ISIA…LAPF, PTPV…ALAT, WHLL…LLAI, MLAY…IVGD, YMLF…LFGL, ALSL…AGFF, LYLF…IGLL, and MTVC…ILAI.

The protein belongs to the complex I subunit 2 family. NDH is composed of at least 16 different subunits, 5 of which are encoded in the nucleus.

It is found in the plastid. Its subcellular location is the chloroplast thylakoid membrane. It carries out the reaction a plastoquinone + NADH + (n+1) H(+)(in) = a plastoquinol + NAD(+) + n H(+)(out). It catalyses the reaction a plastoquinone + NADPH + (n+1) H(+)(in) = a plastoquinol + NADP(+) + n H(+)(out). Its function is as follows. NDH shuttles electrons from NAD(P)H:plastoquinone, via FMN and iron-sulfur (Fe-S) centers, to quinones in the photosynthetic chain and possibly in a chloroplast respiratory chain. The immediate electron acceptor for the enzyme in this species is believed to be plastoquinone. Couples the redox reaction to proton translocation, and thus conserves the redox energy in a proton gradient. The polypeptide is NAD(P)H-quinone oxidoreductase subunit 2 B, chloroplastic (Zea mays (Maize)).